A 144-amino-acid polypeptide reads, in one-letter code: L-fucose mutarotase (144 aa).

Histidine 22 (proton donor) is an active-site residue. Substrate is bound by residues aspartate 30, arginine 109, and tyrosine 131 to asparagine 133.

This sequence belongs to the RbsD / FucU family. FucU mutarotase subfamily. Homodecamer.

It localises to the cytoplasm. The enzyme catalyses alpha-L-fucose = beta-L-fucose. It functions in the pathway carbohydrate metabolism; L-fucose metabolism. Functionally, involved in the anomeric conversion of L-fucose. This chain is L-fucose mutarotase, found in Haemophilus influenzae (strain PittEE).